The primary structure comprises 238 residues: CD63 antigen (238 aa).

At 2–11 (AVEGGMKCVK) the chain is on the cytoplasmic side. A helical membrane pass occupies residues 12 to 32 (FLLYVLLLAFCACAVGLIAIG). The Extracellular segment spans residues 33-51 (VAVQVVLKQAITHETTAGS). Residues 52–72 (LLPVVIIAVGAFLFLVAFVGC) traverse the membrane as a helical segment. The Cytoplasmic segment spans residues 73 to 81 (CGACKENYC). The helical transmembrane segment at 82-102 (LMITFAIFLSLIMLVEVAVAI) threads the bilayer. Over 103 to 203 (AGYVFRDQVK…TIAAWLRKNV (101 aa)) the chain is Extracellular. Residues asparagine 130, asparagine 150, and asparagine 172 are each glycosylated (N-linked (GlcNAc...) asparagine). Residues 204–224 (LLVAGAALGIAFVEVLGIIFS) traverse the membrane as a helical segment. Over 225-238 (CCLVKSIRSGYEVM) the chain is Cytoplasmic. Positions 234 to 238 (GYEVM) match the Lysosomal targeting motif motif.

Belongs to the tetraspanin (TM4SF) family. In terms of assembly, interacts with TIMP1 and ITGB1 and recruits TIMP1 to ITGB1. Interacts with CD9. Identified in a complex with CD9 and ITGB3. Interacts with PMEL. Interacts with KDR/VEGFR2; identified in a complex with ITGB1 and KDR/VEGFR2 and is required to recruit KDR to ITGB1 complexes. Interacts with SYT7. Post-translationally, palmitoylated at a low, basal level in unstimulated platelets. The level of palmitoylation increases when platelets are activated by thrombin (in vitro). In terms of tissue distribution, detected in mast cells and platelets (at protein level).

The protein localises to the cell membrane. It localises to the lysosome membrane. It is found in the late endosome membrane. Its subcellular location is the endosome. The protein resides in the multivesicular body. The protein localises to the melanosome. It localises to the secreted. It is found in the extracellular exosome. Its subcellular location is the cell surface. Functionally, functions as a cell surface receptor for TIMP1 and plays a role in the activation of cellular signaling cascades. Plays a role in the activation of ITGB1 and integrin signaling, leading to the activation of AKT, FAK/PTK2 and MAP kinases. Promotes cell survival, reorganization of the actin cytoskeleton, cell adhesion, spreading and migration, via its role in the activation of AKT and FAK/PTK2. Plays a role in VEGFA signaling via its role in regulating the internalization of KDR/VEGFR2. Plays a role in intracellular vesicular transport processes, and is required for normal trafficking of the PMEL luminal domain that is essential for the development and maturation of melanocytes. Plays a role in the adhesion of leukocytes onto endothelial cells via its role in the regulation of SELP trafficking. May play a role in mast cell degranulation in response to Ms4a2/FceRI stimulation, but not in mast cell degranulation in response to other stimuli. This is CD63 antigen (Cd63) from Rattus norvegicus (Rat).